The sequence spans 502 residues: Maturase K (502 aa).

It belongs to the intron maturase 2 family. MatK subfamily.

The protein resides in the plastid. The protein localises to the chloroplast. Functionally, usually encoded in the trnK tRNA gene intron. Probably assists in splicing its own and other chloroplast group II introns. This is Maturase K from Brassica campestris (Field mustard).